The sequence spans 71 residues: Ceratotoxin-A (71 aa).

The first 23 residues, 1–23, serve as a signal peptide directing secretion; that stretch reads MANLKAVFLICIVAFIAFQCVVA. 2 propeptides span residues 24–35 and 65–71; these read EPAAEDSIVVKR and VAAGLVG.

In terms of assembly, homomer of four to six subunits.

It is found in the secreted. Functionally, female-specific peptides with potent activity against Gram-positive and Gram-negative bacteria. They have as well hemolytic activity. The polypeptide is Ceratotoxin-A (CTXA2) (Ceratitis capitata (Mediterranean fruit fly)).